The primary structure comprises 436 residues: UPF0597 protein YhaM (436 aa).

The protein belongs to the UPF0597 family.

The protein is UPF0597 protein YhaM of Escherichia coli O45:K1 (strain S88 / ExPEC).